A 233-amino-acid chain; its full sequence is 2,3-bisphosphoglycerate-dependent phosphoglycerate mutase (233 aa).

Residues 8–15, 21–22, Arg60, 87–90, Lys98, 114–115, and 183–184 each bind substrate; these read RHGESEWN, TG, ERHY, RR, and GN. His9 (tele-phosphohistidine intermediate) is an active-site residue. The active-site Proton donor/acceptor is the Glu87.

The protein belongs to the phosphoglycerate mutase family. BPG-dependent PGAM subfamily.

The catalysed reaction is (2R)-2-phosphoglycerate = (2R)-3-phosphoglycerate. The protein operates within carbohydrate degradation; glycolysis; pyruvate from D-glyceraldehyde 3-phosphate: step 3/5. Catalyzes the interconversion of 2-phosphoglycerate and 3-phosphoglycerate. The protein is 2,3-bisphosphoglycerate-dependent phosphoglycerate mutase of Lactococcus lactis subsp. cremoris (strain MG1363).